We begin with the raw amino-acid sequence, 197 residues long: Thymidylate kinase (197 aa).

Residue 7 to 14 (GIDGSGKS) participates in ATP binding.

The protein belongs to the thymidylate kinase family.

The enzyme catalyses dTMP + ATP = dTDP + ADP. Functionally, phosphorylation of dTMP to form dTDP in both de novo and salvage pathways of dTTP synthesis. The chain is Thymidylate kinase from Thermotoga petrophila (strain ATCC BAA-488 / DSM 13995 / JCM 10881 / RKU-1).